The sequence spans 1528 residues: Rho GTPase-activating protein 7 (1528 aa).

Disordered stretches follow at residues 72–94 (DFPG…HEGE), 288–310 (MSAE…PPKV), and 372–436 (ALST…TKPK). Basic and acidic residues predominate over residues 81–94 (LSKDVDENDSHEGE). Residues 374-384 (STSSSPSGTPT) show a composition bias toward low complexity. Over residues 396–436 (GSESGADTISVNQTRVNLSSDTESTDLPSSTPVANSGTKPK) the composition is skewed to polar residues. An SAM domain is found at 448-515 (KAEIEAKEAC…LNKCAVMKLE (68 aa)). Phosphoserine is present on residues S523, S526, and S566. Disordered regions lie at residues 558–617 (PKQD…ATPR), 732–764 (RSVS…RTRS), 829–876 (PSGN…SSRL), and 928–990 (SDEG…GVGA). 2 stretches are compositionally biased toward low complexity: residues 591–605 (VSSV…SLPS) and 734–760 (VSNS…SPVT). A focal adhesion-targeting (FAT) region spans residues 710–884 (QLNCVEISAL…RLSIYDNVPG (175 aa)). Residue S757 is modified to Phosphoserine. Over residues 851–862 (LRRENSSDSPKE) the composition is skewed to basic and acidic residues. Polar residues predominate over residues 936–948 (ALDSVSPCPSSPK). The span at 950–960 (IHLDVDNDRTT) shows a compositional bias: basic and acidic residues. Polar residues predominate over residues 961–972 (PSDLDSTGNSLN). Positions 1051–1073 (KHGFSWAVPKFMKRIKVPDYKDR) are polybasic cluster (PBR). The region spanning 1078–1284 (VPLTVNVQRT…HMIAECKKLF (207 aa)) is the Rho-GAP domain. The 208-residue stretch at 1314–1521 (GNDDSADYQH…RDSFSNQNTE (208 aa)) folds into the START domain.

Interacts with EF1A1, facilitates EF1A1 distribution to the membrane periphery and ruffles upon growth factor stimulation and suppresses cell migration. Interacts with tensin TNS1 (via N-terminus); the interaction is decreased by phosphorylation of TNS1. Interacts with TNS3 and PTEN; in resting cells, interacts with TNS3 (via C2 tensin-type domain) but, following growth factor stimulation, TNS3 and PTEN are phosphorylated which leads to weakened interaction with TNS3 and enhanced interaction with PTEN. Interacts (via C-terminus) with tensin TNS4 (via SH2 domain); the interaction is independent of tyrosine phosphorylation of DLC1. As to expression, highest level of expression in the spleen, with rather lower levels in prostate, testis, ovary, small intestine and colon, but none in the thymus.

It localises to the cytoplasm. The protein resides in the cell junction. Its subcellular location is the focal adhesion. The protein localises to the membrane. Functions as a GTPase-activating protein for the small GTPases RHOA, RHOB, RHOC and CDC42, terminating their downstream signaling. This induces morphological changes and detachment through cytoskeletal reorganization, playing a critical role in biological processes such as cell migration and proliferation. Also functions in vivo as an activator of the phospholipase PLCD1. Active DLC1 increases cell migration velocity but reduces directionality. Required for growth factor-induced epithelial cell migration; in resting cells, interacts with TNS3 while PTEN interacts with the p85 regulatory subunit of the PI3K kinase complex but growth factor stimulation induces phosphorylation of TNS3 and PTEN, causing them to change their binding preference so that PTEN interacts with DLC1 and TNS3 interacts with p85. The PTEN-DLC1 complex translocates to the posterior of migrating cells to activate RHOA while the TNS3-p85 complex translocates to the leading edge of migrating cells to promote RAC1 activation. The polypeptide is Rho GTPase-activating protein 7 (DLC1) (Homo sapiens (Human)).